A 500-amino-acid chain; its full sequence is Oryzalexin D synthase (500 aa).

The chain crosses the membrane as a helical span at residues 4-24 (SQMWLLWGALSVALFFYFSTL). Residue Cys442 participates in heme binding.

Belongs to the cytochrome P450 family. The cofactor is heme.

Its subcellular location is the membrane. The catalysed reaction is ent-cassa-12,15-diene + reduced [NADPH--hemoprotein reductase] + O2 = ent-11beta-hydroxycassa-12,15-diene + oxidized [NADPH--hemoprotein reductase] + H2O + H(+). The enzyme catalyses ent-sandaracopimaradien-3beta-ol + reduced [NADPH--hemoprotein reductase] + O2 = oryzalexin D + oxidized [NADPH--hemoprotein reductase] + H2O + H(+). Its function is as follows. Enzyme of the diterpenoid metabolism involved in the biosynthesis of both phytocassane and the oryzalexin class of phytoalexins. Can hydroxylate syn-pimaradiene, ent-pimaradiene, ent-sandaracopimaradiene, ent-isokaurene, ent-kaurene, and ent-cassadiene, but no activity with syn-stemodene, syn-stemarene, syn-labdatriene, C11-alpha-hydroxy-ent-cassadiene or syn-pimadien-19-oic acid as substrates. Hydroxylates 3-alpha-hydroxy-ent-sandaracopimaradiene at C-7-beta, resulting in a 3-alpha,7-beta-diol corresponding to oryzalexins D. This chain is Oryzalexin D synthase, found in Oryza sativa subsp. japonica (Rice).